A 250-amino-acid chain; its full sequence is tRNA-specific adenosine deaminase subunit TAD2 (250 aa).

The 119-residue stretch at Met1–Leu119 folds into the CMP/dCMP-type deaminase domain. A Zn(2+)-binding site is contributed by His54. Catalysis depends on Glu56, which acts as the Proton donor. Zn(2+) contacts are provided by Cys88 and Cys91.

The protein belongs to the cytidine and deoxycytidylate deaminase family. ADAT2 subfamily. As to quaternary structure, heterodimer with TAD3. Zn(2+) is required as a cofactor.

Its subcellular location is the cytoplasm. The protein localises to the nucleus. It catalyses the reaction adenosine(34) in tRNA + H2O + H(+) = inosine(34) in tRNA + NH4(+). Its function is as follows. Structural subunit of tRNA-specific adenosine deaminase, which deaminates adenosine-34 (the first, also called wobble position of the anticodon) to inosine in many tRNAs. Inosine-34 allows the decoding of 3 different nucleotides at the third position of mRNA codons, as inosine is able to pair with U, C, and A. The protein is tRNA-specific adenosine deaminase subunit TAD2 (TAD2) of Saccharomyces cerevisiae (strain ATCC 204508 / S288c) (Baker's yeast).